Consider the following 210-residue polypeptide: Small ribosomal subunit protein uS3 (210 aa).

The region spanning 17–86 (IDEFLEKELR…NPQIDVQEIK (70 aa)) is the KH type-2 domain.

The protein belongs to the universal ribosomal protein uS3 family. As to quaternary structure, part of the 30S ribosomal subunit.

Binds the lower part of the 30S subunit head. The sequence is that of Small ribosomal subunit protein uS3 from Pyrococcus abyssi (strain GE5 / Orsay).